The primary structure comprises 273 residues: Undecaprenyl-diphosphatase (273 aa).

7 helical membrane passes run 6 to 26, 45 to 65, 90 to 110, 116 to 136, 190 to 210, 222 to 242, and 252 to 272; these read SLLI…LPVS, AKTF…VMFW, LTLI…LLFH, LFNP…LIAA, YAAS…ATAL, GDIP…LIAI, and ISFI…YVVF.

It belongs to the UppP family.

It is found in the cell inner membrane. The enzyme catalyses di-trans,octa-cis-undecaprenyl diphosphate + H2O = di-trans,octa-cis-undecaprenyl phosphate + phosphate + H(+). In terms of biological role, catalyzes the dephosphorylation of undecaprenyl diphosphate (UPP). Confers resistance to bacitracin. The sequence is that of Undecaprenyl-diphosphatase from Escherichia coli O139:H28 (strain E24377A / ETEC).